A 318-amino-acid polypeptide reads, in one-letter code: Mitochondrial thiamine pyrophosphate carrier (318 aa).

3 Solcar repeats span residues 13–106 (ISNV…LTEL), 116–202 (RDFS…LKRA), and 214–309 (NGNF…FCNF). A helical transmembrane segment spans residues 19 to 39 (AVAGSVSGLVTRVLISPLDVI). Ser-51 carries the post-translational modification Phosphoserine. 4 consecutive transmembrane segments (helical) span residues 87-107 (LLSIGYGAVQFLSFEALTELV), 122-142 (FLCGGLSACVATLAVHPVDVL), 173-193 (VFYKGLNPTLIAIFPYAGFQF), and 220-240 (LLCGSGAGVISKTLTYPLDLF). The short motif at 241–246 (KKRLQV) is the Substrate recognition element. The chain crosses the membrane as a helical span at residues 293-313 (ALSTGLVFFWYELFCNFFHHM).

This sequence belongs to the mitochondrial carrier (TC 2.A.29) family.

It localises to the mitochondrion membrane. It catalyses the reaction thiamine phosphate(out) + thiamine diphosphate(in) = thiamine phosphate(in) + thiamine diphosphate(out). Functionally, mitochondrial transporter mediating uptake of thiamine diphosphate into mitochondria. It is not clear if the antiporter activity is affected by the membrane potential or by the proton electrochemical gradient. This chain is Mitochondrial thiamine pyrophosphate carrier (SLC25A19), found in Bos taurus (Bovine).